The following is a 198-amino-acid chain: CASP-like protein 4B3 (198 aa).

The segment at 1–27 (MSSSGPPAGDGRDDASGPGPAGAAAAA) is disordered. The Cytoplasmic segment spans residues 1-51 (MSSSGPPAGDGRDDASGPGPAGAAAAADGSVPVSRSIVERWKMEPAAARAR). Residues 16–27 (SGPGPAGAAAAA) are compositionally biased toward low complexity. The helical transmembrane segment at 52–72 (LLLRAVAWLFSLLALVVMASN) threads the bilayer. The Extracellular segment spans residues 73–85 (KHGHGGAQDFDNY). A helical membrane pass occupies residues 86–106 (PEYTYCLGISIIAVLYTTAQV). At 107–124 (TRDVHRLSWGRDVIAGRK) the chain is on the cytoplasmic side. A helical transmembrane segment spans residues 125–145 (AAAVVDFAGDQVVAYLLMSAL). Residues 146–166 (SAAAPVTDYMRQAADNLFTDS) lie on the Extracellular side of the membrane. Residues 167–187 (AAAAISMAFLAFLAAGLSALV) traverse the membrane as a helical segment. Topologically, residues 188–198 (SGYNLAMEVLV) are cytoplasmic.

Belongs to the Casparian strip membrane proteins (CASP) family. Homodimer and heterodimers.

The protein localises to the cell membrane. The chain is CASP-like protein 4B3 from Oryza sativa subsp. japonica (Rice).